The primary structure comprises 212 residues: Phosphoribosylglycinamide formyltransferase (212 aa).

Residue 11–13 (GSN) coordinates N(1)-(5-phospho-beta-D-ribosyl)glycinamide. Residues Arg-64, 89–92 (MRIL), and Asn-106 each bind (6R)-10-formyltetrahydrofolate. The Proton donor role is filled by His-108. Position 140–144 (140–144 (TDELD)) interacts with (6R)-10-formyltetrahydrofolate. Residue 170–173 (QTQE) participates in N(1)-(5-phospho-beta-D-ribosyl)glycinamide binding.

This sequence belongs to the GART family. As to quaternary structure, monomer. Homodimer below pH 6.8.

The catalysed reaction is N(1)-(5-phospho-beta-D-ribosyl)glycinamide + (6R)-10-formyltetrahydrofolate = N(2)-formyl-N(1)-(5-phospho-beta-D-ribosyl)glycinamide + (6S)-5,6,7,8-tetrahydrofolate + H(+). Its pathway is purine metabolism; IMP biosynthesis via de novo pathway; N(2)-formyl-N(1)-(5-phospho-D-ribosyl)glycinamide from N(1)-(5-phospho-D-ribosyl)glycinamide (10-formyl THF route): step 1/1. Its activity is regulated as follows. Inhibited by N10-(bromoacetyl)-5,8-dideazafolate. In terms of biological role, catalyzes the transfer of a formyl group from 10-formyltetrahydrofolate to 5-phospho-ribosyl-glycinamide (GAR), producing 5-phospho-ribosyl-N-formylglycinamide (FGAR) and tetrahydrofolate. In Escherichia coli (strain K12), this protein is Phosphoribosylglycinamide formyltransferase.